A 135-amino-acid chain; its full sequence is Large ribosomal subunit protein bL19 (135 aa).

It belongs to the bacterial ribosomal protein bL19 family.

Functionally, this protein is located at the 30S-50S ribosomal subunit interface and may play a role in the structure and function of the aminoacyl-tRNA binding site. This chain is Large ribosomal subunit protein bL19, found in Xanthomonas oryzae pv. oryzae (strain KACC10331 / KXO85).